A 221-amino-acid polypeptide reads, in one-letter code: Urease accessory protein UreF (221 aa).

This sequence belongs to the UreF family. In terms of assembly, ureD, UreF and UreG form a complex that acts as a GTP-hydrolysis-dependent molecular chaperone, activating the urease apoprotein by helping to assemble the nickel containing metallocenter of UreC. The UreE protein probably delivers the nickel.

It localises to the cytoplasm. In terms of biological role, required for maturation of urease via the functional incorporation of the urease nickel metallocenter. The polypeptide is Urease accessory protein UreF (Teredinibacter turnerae (strain ATCC 39867 / T7901)).